The sequence spans 364 residues: Protein PROCA1 (364 aa).

Positions 172–182 (LNEEEEEEEEE) are enriched in acidic residues. Positions 172–364 (LNEEEEEEEE…SPPGSNPNLS (193 aa)) are disordered. Residues 203–223 (SMATGTPDSTAPITIWRSESP) are compositionally biased toward polar residues. Basic residues predominate over residues 232–241 (VIKKVKKKKE). Over residues 242 to 253 (KEKDKEEMDEKA) the composition is skewed to basic and acidic residues. A compositionally biased stretch (basic residues) spans 254–270 (KLKKKAKKGQLTKKKSP). Residues Ser276, Ser308, Ser318, Ser319, Ser355, and Ser364 each carry the phosphoserine modification.

The protein belongs to the PROCA1 family. In terms of tissue distribution, high expressed in testis.

The sequence is that of Protein PROCA1 (PROCA1) from Homo sapiens (Human).